A 381-amino-acid polypeptide reads, in one-letter code: 3-dehydroquinate synthase (381 aa).

NAD(+) is bound by residues 81–86 (EGESSK), 115–119 (GVIGD), 139–140 (TS), K152, and K161. Zn(2+) is bound by residues E194, H256, and H274.

Belongs to the sugar phosphate cyclases superfamily. Dehydroquinate synthase family. Co(2+) is required as a cofactor. Zn(2+) serves as cofactor. The cofactor is NAD(+).

The protein resides in the cytoplasm. The catalysed reaction is 7-phospho-2-dehydro-3-deoxy-D-arabino-heptonate = 3-dehydroquinate + phosphate. It participates in metabolic intermediate biosynthesis; chorismate biosynthesis; chorismate from D-erythrose 4-phosphate and phosphoenolpyruvate: step 2/7. Catalyzes the conversion of 3-deoxy-D-arabino-heptulosonate 7-phosphate (DAHP) to dehydroquinate (DHQ). This Rhodopseudomonas palustris (strain ATCC BAA-98 / CGA009) protein is 3-dehydroquinate synthase.